A 75-amino-acid chain; its full sequence is UPF0346 protein LJ_1103 (75 aa).

The protein belongs to the UPF0346 family.

This is UPF0346 protein LJ_1103 from Lactobacillus johnsonii (strain CNCM I-12250 / La1 / NCC 533).